Consider the following 337-residue polypeptide: DNA-directed RNA polymerase subunit alpha (337 aa).

Residues 1 to 233 are alpha N-terminal domain (alpha-NTD); the sequence is MIQKNWQELI…DQLSIFVNFE (233 aa). Residues 249-337 are alpha C-terminal domain (alpha-CTD); that stretch reads FNPALLKKVD…DLAKRYEDQY (89 aa).

This sequence belongs to the RNA polymerase alpha chain family. Homodimer. The RNAP catalytic core consists of 2 alpha, 1 beta, 1 beta' and 1 omega subunit. When a sigma factor is associated with the core the holoenzyme is formed, which can initiate transcription.

The catalysed reaction is RNA(n) + a ribonucleoside 5'-triphosphate = RNA(n+1) + diphosphate. DNA-dependent RNA polymerase catalyzes the transcription of DNA into RNA using the four ribonucleoside triphosphates as substrates. This is DNA-directed RNA polymerase subunit alpha from Brucella abortus (strain S19).